The following is a 329-amino-acid chain: UDP-sugar transporter sqv-7 (329 aa).

A run of 9 helical transmembrane segments spans residues 15–34, 41–63, 86–108, 129–151, 155–174, 187–209, 224–246, 253–275, and 280–302; these read SAVF…KILL, SFLF…AKMF, YFFN…FTVL, SKAV…IYDL, ALGY…LGVY, YGLM…QYTG, TSSV…YSLV, SALT…GMFS, and VFQW…YTYV.

Belongs to the TPT transporter family. SLC35D subfamily.

It is found in the golgi apparatus membrane. Acts as a transporter of UDP-glucuronic acid (UDP-GlcA), UDP-N-acetylgalactosamine (UDP-GalNAc) and UDP-galactose (UDP-Gal) from the cytoplasm into the Golgi lumen. Involved in the biosynthesis of glycoconjugates that play a pivotal role in development. Involved in the synthesis of chondroitin sulfate and heparan sulfate proteoglycans. Required for embryonic development. Involved in vulva epithelium invagination and embryonic development. Involved in the directed migration of hermaphrodite-specific neurons. This Caenorhabditis elegans protein is UDP-sugar transporter sqv-7 (sqv-7).